A 500-amino-acid polypeptide reads, in one-letter code: Prostacyclin synthase (500 aa).

A helical membrane pass occupies residues 1–20 (MAWAALLGLLAALLLLLLLS). Substrate-binding positions include Arg106, Leu112, Asn287, 358–359 (TR), and Arg382. Residue Cys441 coordinates heme.

The protein belongs to the cytochrome P450 family. Heme is required as a cofactor. As to expression, widely expressed; particularly abundant in ovary, heart, skeletal muscle, lung and prostate.

It is found in the endoplasmic reticulum membrane. It catalyses the reaction prostaglandin H2 = prostaglandin I2. The catalysed reaction is a hydroperoxyeicosatetraenoate = an oxoeicosatetraenoate + H2O. It carries out the reaction (15S)-hydroperoxy-(5Z,8Z,11Z,13E)-eicosatetraenoate = 15-oxo-(5Z,8Z,11Z,13E)-eicosatetraenoate + H2O. The enzyme catalyses (15S)-hydroperoxy-(5Z,8Z,11Z,13E)-eicosatetraenoate + AH2 = (15S)-hydroxy-(5Z,8Z,11Z,13E)-eicosatetraenoate + A + H2O. Catalyzes the biosynthesis and metabolism of eicosanoids. Catalyzes the isomerization of prostaglandin H2 to prostacyclin (= prostaglandin I2), a potent mediator of vasodilation and inhibitor of platelet aggregation. Additionally, displays dehydratase activity, toward hydroperoxyeicosatetraenoates (HPETEs), especially toward (15S)-hydroperoxy-(5Z,8Z,11Z,13E)-eicosatetraenoate (15(S)-HPETE). This chain is Prostacyclin synthase (PTGIS), found in Homo sapiens (Human).